We begin with the raw amino-acid sequence, 181 residues long: Bifunctional adenosylcobalamin biosynthesis protein CobU (181 aa).

Residues 7 to 14 (GGARSGKS) and 31 to 33 (ATS) contribute to the GTP site. Catalysis depends on histidine 47, which acts as the GMP-histidine intermediate. Residues 48–51 (KDGR), glutamate 59, and glutamate 81 each bind GTP.

It belongs to the CobU/CobP family. In terms of assembly, homotrimer.

The catalysed reaction is adenosylcob(III)inamide + GTP = adenosylcob(III)inamide phosphate + GDP + H(+). The enzyme catalyses adenosylcob(III)inamide + ATP = adenosylcob(III)inamide phosphate + ADP + H(+). It catalyses the reaction adenosylcob(III)inamide phosphate + GTP + H(+) = adenosylcob(III)inamide-GDP + diphosphate. It participates in cofactor biosynthesis; adenosylcobalamin biosynthesis; adenosylcobalamin from cob(II)yrinate a,c-diamide: step 5/7. It functions in the pathway cofactor biosynthesis; adenosylcobalamin biosynthesis; adenosylcobalamin from cob(II)yrinate a,c-diamide: step 6/7. Catalyzes ATP-dependent phosphorylation of adenosylcobinamide and addition of GMP to adenosylcobinamide phosphate. The chain is Bifunctional adenosylcobalamin biosynthesis protein CobU (cobU) from Salmonella typhimurium (strain LT2 / SGSC1412 / ATCC 700720).